We begin with the raw amino-acid sequence, 1484 residues long: Chromatin remodeling regulator CECR2 (1484 aa).

A disordered region spans residues 170 to 241 (VQGKSNGELS…RHGSQGPGQG (72 aa)). The segment covering 197 to 209 (TGKRRGRPPKRKK) has biased composition (basic residues). Basic and acidic residues predominate over residues 210-222 (LQEEILLSEKQEE). The span at 223–234 (NSLASEPQTRHG) shows a compositional bias: polar residues. Phosphoserine is present on S422. Positions 434–538 (FELDDDFTAM…RCFHRAMMKH (105 aa)) constitute a Bromo domain. At T546 the chain carries Phosphothreonine. 6 disordered regions span residues 556–704 (EKRE…GPRL), 796–825 (GNHG…PRTL), 919–1053 (GVPY…SYPG), 1165–1259 (VMGG…LFSD), 1287–1320 (AKVP…LDLD), and 1442–1484 (YRPS…LDQS). Position 571 is a phosphoserine (S571). Residues 605 to 614 (SSGDDQSSSS) show a composition bias toward low complexity. The residue at position 1014 (S1014) is a Phosphoserine. Asymmetric dimethylarginine is present on residues R1197 and R1203. Pro residues predominate over residues 1243–1254 (SGPPASQPPPPR). Over residues 1304-1320 (DESMERPESPKEFLDLD) the composition is skewed to basic and acidic residues. S1312 carries the post-translational modification Phosphoserine. Residues 1451–1469 (PVQSQASFPKTPTAATSQE) are compositionally biased toward polar residues. The span at 1474–1484 (HKPPTLPLDQS) shows a compositional bias: pro residues.

As to quaternary structure, component of the CERF-1 ISWI chromatin remodeling complex (also called the CECR2-containing remodeling factor (CERF) complex) at least composed of CECR2 and SMARCA1. Component of the CERF-5 ISWI chromatin remodeling complex at least composed of SMARCA5/SNF2H and CECR2. LUZP1 is detected as part of the CERF-1 and CERF-5 complexes in embryonic stem (ES) cells where it is involved in complex stabilization but is not detected in the complexes in the testis. Interacts with CCAR2; CCAR2 may form part of the CERF-1 and/or CEF-5 ISWI chromatin remodeling complexes in ES cells. Interacts with acetylated lysine residues on histone H2A and H3 (in vitro). Interacts with LRPPRC. Highly expressed in skeletal muscle, thymus, placenta and lung. Expressed at lower level in brain, heart, colon, spleen, kidney.

Its subcellular location is the nucleus. In terms of biological role, regulatory subunit of the ATP-dependent CERF-1 and CERF-5 ISWI chromatin remodeling complexes, which form ordered nucleosome arrays on chromatin and facilitate access to DNA during DNA-templated processes such as DNA replication, transcription, and repair. The complexes do not have the ability to slide mononucleosomes to the center of a DNA template. The CERF-1 ISWI chromatin remodeling complex has a lower ATP hydrolysis rate than the CERF-5 ISWI chromatin remodeling complex. Plays a role in various processes during development: required during embryogenesis for neural tube closure and inner ear development. In adults, required for spermatogenesis, via the formation of ISWI-type chromatin complexes. In histone-modifying complexes, CECR2 recognizes and binds acylated histones: binds histones that are acetylated and/or butyrylated. May also be involved through its interaction with LRPPRC in the integration of cytoskeletal network with vesicular trafficking, nucleocytosolic shuttling, transcription, chromosome remodeling and cytokinesis. The protein is Chromatin remodeling regulator CECR2 (CECR2) of Homo sapiens (Human).